The primary structure comprises 159 residues: Phosphopantetheine adenylyltransferase (159 aa).

Ser9 contributes to the substrate binding site. ATP contacts are provided by residues 9–10 (SF) and His17. Residues Lys41, Ile73, and Lys87 each contribute to the substrate site. Residues 88 to 90 (GLR), Glu98, and 122 to 128 (WGYVSSS) each bind ATP.

The protein belongs to the bacterial CoaD family. As to quaternary structure, homohexamer. It depends on Mg(2+) as a cofactor.

The protein resides in the cytoplasm. It carries out the reaction (R)-4'-phosphopantetheine + ATP + H(+) = 3'-dephospho-CoA + diphosphate. The protein operates within cofactor biosynthesis; coenzyme A biosynthesis; CoA from (R)-pantothenate: step 4/5. Reversibly transfers an adenylyl group from ATP to 4'-phosphopantetheine, yielding dephospho-CoA (dPCoA) and pyrophosphate. The chain is Phosphopantetheine adenylyltransferase from Nocardioides sp. (strain ATCC BAA-499 / JS614).